A 186-amino-acid chain; its full sequence is Chromophore lyase CpcS/CpeS 1 (186 aa).

It belongs to the CpcS/CpeS biliprotein lyase family.

Its function is as follows. Covalently attaches a chromophore to Cys residue(s) of phycobiliproteins. This Synechocystis sp. (strain ATCC 27184 / PCC 6803 / Kazusa) protein is Chromophore lyase CpcS/CpeS 1.